We begin with the raw amino-acid sequence, 63 residues long: MKQSEVKELSVAELQEELGKSRKAYSDLKMAHAVSPLENPIQLRTVRRDVARLATELTKREQQ.

This sequence belongs to the universal ribosomal protein uL29 family.

The protein is Large ribosomal subunit protein uL29 of Christiangramia forsetii (strain DSM 17595 / CGMCC 1.15422 / KT0803) (Gramella forsetii).